The sequence spans 590 residues: AT-rich interactive domain-containing protein 5A (590 aa).

A disordered region spans residues 1-52 (MAAPPAKGNTEQSEEGDLPQLPVSPKPDDEQSRSQSPTQLQDSPEAGGEQEE). Residues 1-294 (MAAPPAKGNT…NKDIQDSPQN (294 aa)) are interaction with SOX9. Residue serine 24 is modified to Phosphoserine. Residues 33–42 (RSQSPTQLQD) are compositionally biased toward polar residues. The ARID domain maps to 50 to 142 (QEEEQAFLVS…LVLPYVRHLK (93 aa)). Glycyl lysine isopeptide (Lys-Gly) (interchain with G-Cter in ubiquitin) cross-links involve residues lysine 80 and lysine 89. Residues 141-229 (LKGEDDKPLP…SGPSPPLTGA (89 aa)) form a disordered region. The segment covering 160-186 (MAKELRGDDGTTEKLKKAKDSEERRVE) has biased composition (basic and acidic residues). Positions 187–210 (QTTPGKTKSDATGQTQLPCQGSSR) are enriched in polar residues. Phosphoserine is present on residues serine 253 and serine 283. Disordered regions lie at residues 275–323 (EGCR…RMEA), 367–402 (GPPG…TRKR), and 419–443 (VPTE…RGLE). The span at 367-381 (GPPGKEEGPTTKESH) shows a compositional bias: basic and acidic residues. Phosphoserine occurs at positions 433 and 458.

As to quaternary structure, interacts with SOX9. Interacts with ESR1. Interacts with RORC. In terms of processing, phosphorylated by MAPK14 on serine residues involving a TLR4 signaling pathway upon lipopolysaccharide (LPS) stimulation leading to its ubiquitination and proteasomal degradation. Ubiquitinated leading to proteasomal degradation; involving WWP1 linked to MAPK14-mediated phosphorylation upon LPS stimulation. In terms of tissue distribution, expressed in T cells (at protein level). Expressed at high levels in cartilage, heart, testis and bone.

Its subcellular location is the nucleus. Its function is as follows. DNA-binding protein that may regulate transcription and act as a repressor by binding to AT-rich stretches in the promoter region of target genes. May positively regulate chondrocyte-specific transcription such as of COL2A1 in collaboration with SOX9 and positively regulate histone H3 acetylation at chondrocyte-specific genes. May stimulate early-stage chondrocyte differentiation and inhibit later stage differention. Can repress ESR1-mediated transcriptional activation; proposed to act as corepressor for selective nuclear hormone receptors. As an RNA-binding protein, involved in the regulation of inflammatory response by stabilizing selective inflammation-related mRNAs, such as STAT3 and TBX21. Also stabilizes IL6 mRNA. Binds to stem loop structures located in the 3'UTRs of IL6, STAT3 and TBX21 mRNAs; at least for STAT3 prevents binding of ZC3H12A to the mRNA stem loop structure thus inhibiting its degradation activity. Contributes to elevated IL6 levels possibly implicated in autoimmunity processes. IL6-dependent stabilization of STAT3 mRNA may promote differentiation of naive CD4+ T-cells into T-helper Th17 cells. In CD4+ T-cells may also inhibit RORC-induced Th17 cell differentiation independently of IL6 signaling. Stabilization of TBX21 mRNA contributes to elevated interferon-gamma secretion in Th1 cells possibly implicated in the establishment of septic shock. Stabilizes TNFRSF4/OX40 mRNA by binding to the conserved stem loop structure in its 3'UTR; thereby competing with the mRNA-destabilizing functions of RC3H1 and endoribonuclease ZC3H12A. The sequence is that of AT-rich interactive domain-containing protein 5A (Arid5a) from Mus musculus (Mouse).